The primary structure comprises 118 residues: Mating-type P-specific polypeptide Pc (118 aa).

The HMG box DNA-binding region spans Lys-29–Arg-97.

Its subcellular location is the nucleus. Mating type proteins are sequence specific DNA-binding proteins that act as master switches in yeast differentiation by controlling gene expression in a cell type-specific fashion. Required for conjugation and efficient meiosis. The polypeptide is Mating-type P-specific polypeptide Pc (matPc) (Schizosaccharomyces kambucha (Fission yeast)).